The chain runs to 102 residues: MYIDITHYLTVSALMFTIGIAGIFLNRKNVIIILMSIELILLSVNLNFVAFSAFLHDLVGQIFALFVLTVAAAEAAIGLAILVVFFRNRGSIAVEDVNVMKG.

3 consecutive transmembrane segments (helical) span residues 5–25 (ITHYLTVSALMFTIGIAGIFL), 31–51 (IIILMSIELILLSVNLNFVAF), and 66–86 (FVLTVAAAEAAIGLAILVVFF).

This sequence belongs to the complex I subunit 4L family. As to quaternary structure, NDH-1 is composed of 14 different subunits. Subunits NuoA, H, J, K, L, M, N constitute the membrane sector of the complex.

It is found in the cell inner membrane. The catalysed reaction is a quinone + NADH + 5 H(+)(in) = a quinol + NAD(+) + 4 H(+)(out). Its function is as follows. NDH-1 shuttles electrons from NADH, via FMN and iron-sulfur (Fe-S) centers, to quinones in the respiratory chain. The immediate electron acceptor for the enzyme in this species is believed to be ubiquinone. Couples the redox reaction to proton translocation (for every two electrons transferred, four hydrogen ions are translocated across the cytoplasmic membrane), and thus conserves the redox energy in a proton gradient. The chain is NADH-quinone oxidoreductase subunit K from Bartonella grahamii (strain as4aup).